The following is a 274-amino-acid chain: Formamidopyrimidine-DNA glycosylase (274 aa).

Pro-2 serves as the catalytic Schiff-base intermediate with DNA. Glu-3 (proton donor) is an active-site residue. Catalysis depends on Lys-60, which acts as the Proton donor; for beta-elimination activity. 2 residues coordinate DNA: His-93 and Arg-112. The FPG-type zinc-finger motif lies at 240 to 274; sequence FVYGRKGEPCKRCGTPIEKTVVAGRGTHYCPRCQR. Arg-264 acts as the Proton donor; for delta-elimination activity in catalysis.

This sequence belongs to the FPG family. In terms of assembly, monomer. Zn(2+) is required as a cofactor.

It carries out the reaction Hydrolysis of DNA containing ring-opened 7-methylguanine residues, releasing 2,6-diamino-4-hydroxy-5-(N-methyl)formamidopyrimidine.. It catalyses the reaction 2'-deoxyribonucleotide-(2'-deoxyribose 5'-phosphate)-2'-deoxyribonucleotide-DNA = a 3'-end 2'-deoxyribonucleotide-(2,3-dehydro-2,3-deoxyribose 5'-phosphate)-DNA + a 5'-end 5'-phospho-2'-deoxyribonucleoside-DNA + H(+). Involved in base excision repair of DNA damaged by oxidation or by mutagenic agents. Acts as a DNA glycosylase that recognizes and removes damaged bases. Has a preference for oxidized purines, such as 7,8-dihydro-8-oxoguanine (8-oxoG). Has AP (apurinic/apyrimidinic) lyase activity and introduces nicks in the DNA strand. Cleaves the DNA backbone by beta-delta elimination to generate a single-strand break at the site of the removed base with both 3'- and 5'-phosphates. This chain is Formamidopyrimidine-DNA glycosylase, found in Geobacillus kaustophilus (strain HTA426).